The chain runs to 263 residues: Isoprenyl transferase (263 aa).

Aspartate 38 is an active-site residue. Residue aspartate 38 participates in Mg(2+) binding. Substrate contacts are provided by residues 39–42, histidine 55, and 83–85; these read GNRR and STD. The active-site Proton acceptor is the asparagine 86. Substrate is bound by residues phenylalanine 87, arginine 89, arginine 212, and 218-220; that span reads RLS. Mg(2+) is bound at residue glutamate 231.

This sequence belongs to the UPP synthase family. In terms of assembly, homodimer. It depends on Mg(2+) as a cofactor.

Its function is as follows. Catalyzes the condensation of isopentenyl diphosphate (IPP) with allylic pyrophosphates generating different type of terpenoids. The polypeptide is Isoprenyl transferase (Thermus thermophilus (strain ATCC BAA-163 / DSM 7039 / HB27)).